Consider the following 463-residue polypeptide: Paraneoplastic antigen Ma3 (463 aa).

The interval 363–410 (VGAVPLPASGNSFDARPSQGYRRRRGRGQHRRGGVARAGSRGSRKRKR) is disordered. Positions 383–396 (YRRRRGRGQHRRGG) are enriched in basic residues. A CCHC-type zinc finger spans residues 412 to 429 (TFCYSCGEDGHIRVQCIN). The interval 440-463 (KQAAVESGNGNWAWDKSHPKSKAK) is disordered.

This sequence belongs to the PNMA family. Expressed at high levels in the brain and testis. Expressed at lower levels in the heart, trachea and kidney.

The protein localises to the nucleus. It localises to the nucleolus. The protein is Paraneoplastic antigen Ma3 (PNMA3) of Homo sapiens (Human).